The primary structure comprises 1034 residues: Protein ITPRID1 (1034 aa).

Disordered stretches follow at residues 223–290, 442–486, and 624–678; these read KTQQ…PTKP, QVSS…KSMT, and QSSL…SSWS. Composition is skewed to polar residues over residues 443–453 and 465–476; these read VSSMTGSQSPT and HSPASQQDSLQE. Residues 477–486 are compositionally biased toward low complexity; that stretch reads SYGSKSKSMT. The span at 669–678 shows a compositional bias: polar residues; the sequence is TDSNAASSWS. The stretch at 843-902 forms a coiled coil; that stretch reads EMETMKMVCQSFREHLEEIEQHFMGQQALYPRDMSEEEREEAEYLRTLREALRQQVAELA.

The sequence is that of Protein ITPRID1 (Itprid1) from Mus musculus (Mouse).